The sequence spans 201 residues: Large ribosomal subunit protein mL61 (201 aa).

The tract at residues 87–118 (RDDKDAKPSSTPFPTSSADGSSPAPKPAQGER) is disordered. Over residues 94–106 (PSSTPFPTSSADG) the composition is skewed to polar residues.

It belongs to the mitochondrion-specific ribosomal protein mL61 family. As to quaternary structure, component of the mitochondrial large ribosomal subunit (mt-LSU). Mature N.crassa 74S mitochondrial ribosomes consist of a small (37S) and a large (54S) subunit. The 37S small subunit contains a 16S ribosomal RNA (16S mt-rRNA) and 32 different proteins. The 54S large subunit contains a 23S rRNA (23S mt-rRNA) and 42 different proteins.

The protein resides in the mitochondrion. Its function is as follows. Component of the mitochondrial ribosome (mitoribosome), a dedicated translation machinery responsible for the synthesis of mitochondrial genome-encoded proteins, including at least some of the essential transmembrane subunits of the mitochondrial respiratory chain. The mitoribosomes are attached to the mitochondrial inner membrane and translation products are cotranslationally integrated into the membrane. This is Large ribosomal subunit protein mL61 (mrp49) from Neurospora crassa (strain ATCC 24698 / 74-OR23-1A / CBS 708.71 / DSM 1257 / FGSC 987).